The primary structure comprises 185 residues: Ribose 1,5-bisphosphate phosphokinase PhnN (185 aa).

Residue 13-20 participates in ATP binding; that stretch reads GPSGAGKD.

The protein belongs to the ribose 1,5-bisphosphokinase family.

It carries out the reaction alpha-D-ribose 1,5-bisphosphate + ATP = 5-phospho-alpha-D-ribose 1-diphosphate + ADP. It participates in metabolic intermediate biosynthesis; 5-phospho-alpha-D-ribose 1-diphosphate biosynthesis; 5-phospho-alpha-D-ribose 1-diphosphate from D-ribose 5-phosphate (route II): step 3/3. Catalyzes the phosphorylation of ribose 1,5-bisphosphate to 5-phospho-D-ribosyl alpha-1-diphosphate (PRPP). The chain is Ribose 1,5-bisphosphate phosphokinase PhnN from Chromobacterium violaceum (strain ATCC 12472 / DSM 30191 / JCM 1249 / CCUG 213 / NBRC 12614 / NCIMB 9131 / NCTC 9757 / MK).